An 83-amino-acid polypeptide reads, in one-letter code: Cytochrome b559 subunit alpha (83 aa).

Residues 21–35 traverse the membrane as a helical segment; it reads VIHSITIPSLFIAGW. Histidine 23 provides a ligand contact to heme.

This sequence belongs to the PsbE/PsbF family. Heterodimer of an alpha subunit and a beta subunit. PSII is composed of 1 copy each of membrane proteins PsbA, PsbB, PsbC, PsbD, PsbE, PsbF, PsbH, PsbI, PsbJ, PsbK, PsbL, PsbM, PsbT, PsbX, PsbY, PsbZ, Psb30/Ycf12, at least 3 peripheral proteins of the oxygen-evolving complex and a large number of cofactors. It forms dimeric complexes. Heme b is required as a cofactor.

It localises to the plastid. The protein localises to the chloroplast thylakoid membrane. Its function is as follows. This b-type cytochrome is tightly associated with the reaction center of photosystem II (PSII). PSII is a light-driven water:plastoquinone oxidoreductase that uses light energy to abstract electrons from H(2)O, generating O(2) and a proton gradient subsequently used for ATP formation. It consists of a core antenna complex that captures photons, and an electron transfer chain that converts photonic excitation into a charge separation. The sequence is that of Cytochrome b559 subunit alpha from Mesembryanthemum crystallinum (Common ice plant).